A 607-amino-acid polypeptide reads, in one-letter code: Elongation factor 4 (607 aa).

The region spanning 11-193 (KKIRNFSIIA…QIVELVPPPT (183 aa)) is the tr-type G domain. Residues 23–28 (DHGKST) and 140–143 (NKID) each bind GTP.

It belongs to the TRAFAC class translation factor GTPase superfamily. Classic translation factor GTPase family. LepA subfamily.

Its subcellular location is the cell membrane. It catalyses the reaction GTP + H2O = GDP + phosphate + H(+). Functionally, required for accurate and efficient protein synthesis under certain stress conditions. May act as a fidelity factor of the translation reaction, by catalyzing a one-codon backward translocation of tRNAs on improperly translocated ribosomes. Back-translocation proceeds from a post-translocation (POST) complex to a pre-translocation (PRE) complex, thus giving elongation factor G a second chance to translocate the tRNAs correctly. Binds to ribosomes in a GTP-dependent manner. This is Elongation factor 4 from Exiguobacterium sp. (strain ATCC BAA-1283 / AT1b).